The chain runs to 430 residues: Aspartate aminotransferase, mitochondrial (430 aa).

The N-terminal 28 residues, 1–28 (MALAMMIRNAASKRGMTPISGHFGGLRS), are a transit peptide targeting the mitochondrion. L-aspartate contacts are provided by G65, W160, and N213. K277 is modified (N6-(pyridoxal phosphate)lysine). Position 405 (R405) interacts with L-aspartate.

Belongs to the class-I pyridoxal-phosphate-dependent aminotransferase family. Homodimer. Requires pyridoxal 5'-phosphate as cofactor.

It is found in the mitochondrion matrix. It carries out the reaction L-aspartate + 2-oxoglutarate = oxaloacetate + L-glutamate. Amino acid aminotransferase important for the metabolism of amino acids and Krebs-cycle related organic acids. No activity with D-Asp or D-Ala as amino donors. In plants, it is involved in nitrogen metabolism and in aspects of carbon and energy metabolism. This is Aspartate aminotransferase, mitochondrial (ASP1) from Arabidopsis thaliana (Mouse-ear cress).